The sequence spans 460 residues: Cysteine--tRNA ligase (460 aa).

C28 contributes to the Zn(2+) binding site. A 'HIGH' region motif is present at residues 30–40; the sequence is VTIYDLCHIGH. Zn(2+)-binding residues include C209, H234, and E238. A 'KMSKS' region motif is present at residues 266-270; that stretch reads KMSKS. K269 provides a ligand contact to ATP.

It belongs to the class-I aminoacyl-tRNA synthetase family. As to quaternary structure, monomer. Zn(2+) is required as a cofactor.

The protein localises to the cytoplasm. The catalysed reaction is tRNA(Cys) + L-cysteine + ATP = L-cysteinyl-tRNA(Cys) + AMP + diphosphate. In Vibrio vulnificus (strain CMCP6), this protein is Cysteine--tRNA ligase.